Here is a 118-residue protein sequence, read N- to C-terminus: Protein Rev (118 aa).

Residue serine 5 is modified to Phosphoserine; by host CK2. The tract at residues 18–26 (LIKILYQSN) is homomultimerization. The disordered stretch occupies residues 23–49 (YQSNPPPSPEGTRQARRNRRRRWRARQ). The Nuclear localization signal and RNA-binding (RRE) signature appears at 34–50 (TRQARRNRRRRWRARQR). The segment covering 36–49 (QARRNRRRRWRARQ) has biased composition (basic residues). A Nuclear export signal and binding to XPO1 motif is present at residues 73–84 (LQLPPLERLNLN). The interval 89-118 (CGASGTQGVGSPQISVESPTVLESGTEEQC) is disordered. Serine 92 and serine 99 each carry phosphoserine; by host. A compositionally biased stretch (polar residues) spans 92–112 (SGTQGVGSPQISVESPTVLES).

The protein belongs to the HIV-1 REV protein family. As to quaternary structure, homomultimer; when bound to the RRE. Multimeric assembly is essential for activity and may involve XPO1. Binds to human KPNB1, XPO1, TNPO1, RANBP5 and IPO7. Interacts with the viral Integrase. Interacts with human KHDRBS1. Interacts with human NAP1; this interaction decreases Rev multimerization and stimulates its activity. Interacts with human DEAD-box helicases DDX3 and DDX24; these interactions may serve for viral RNA export to the cytoplasm and packaging, respectively. Interacts with human PSIP1; this interaction may inhibit HIV-1 DNA integration by promoting dissociation of the Integrase-LEDGF/p75 complex. Post-translationally, asymmetrically arginine dimethylated at one site by host PRMT6. Methylation impairs the RNA-binding activity and export of viral RNA from the nucleus to the cytoplasm. In terms of processing, phosphorylated by protein kinase CK2. Presence of, and maybe binding to the N-terminus of the regulatory beta subunit of CK2 is necessary for CK2-mediated Rev's phosphorylation.

It is found in the host nucleus. The protein resides in the host nucleolus. It localises to the host cytoplasm. In terms of biological role, escorts unspliced or incompletely spliced viral pre-mRNAs (late transcripts) out of the nucleus of infected cells. These pre-mRNAs carry a recognition sequence called Rev responsive element (RRE) located in the env gene, that is not present in fully spliced viral mRNAs (early transcripts). This function is essential since most viral proteins are translated from unspliced or partially spliced pre-mRNAs which cannot exit the nucleus by the pathway used by fully processed cellular mRNAs. Rev itself is translated from a fully spliced mRNA that readily exits the nucleus. Rev's nuclear localization signal (NLS) binds directly to KPNB1/Importin beta-1 without previous binding to KPNA1/Importin alpha-1. KPNB1 binds to the GDP bound form of RAN (Ran-GDP) and targets Rev to the nucleus. In the nucleus, the conversion from Ran-GDP to Ran-GTP dissociates Rev from KPNB1 and allows Rev's binding to the RRE in viral pre-mRNAs. Rev multimerization on the RRE via cooperative assembly exposes its nuclear export signal (NES) to the surface. Rev can then form a complex with XPO1/CRM1 and Ran-GTP, leading to nuclear export of the complex. Conversion from Ran-GTP to Ran-GDP mediates dissociation of the Rev/RRE/XPO1/RAN complex, so that Rev can return to the nucleus for a subsequent round of export. Beside KPNB1, also seems to interact with TNPO1/Transportin-1, RANBP5/IPO5 and IPO7/RANBP7 for nuclear import. The nucleoporin-like HRB/RIP is an essential cofactor that probably indirectly interacts with Rev to release HIV RNAs from the perinuclear region to the cytoplasm. In Human immunodeficiency virus type 1 group M subtype D (isolate Z2/CDC-Z34) (HIV-1), this protein is Protein Rev.